Here is a 197-residue protein sequence, read N- to C-terminus: RNA polymerase II subunit A C-terminal domain phosphatase ssup-72 (197 aa).

Residue Ser-39 is modified to Phosphoserine.

Belongs to the SSU72 phosphatase family. In terms of assembly, may interact with synd-1 (via C-terminus); the interaction may prevent ssup-72 binding to RNA polymerase II ama-1. May interact with RNA polymerase II ama-1. In terms of processing, may be phosphorylated by kin-20. In terms of tissue distribution, expressed in epidermis, intestine and nervous system.

The protein localises to the nucleus. The catalysed reaction is O-phospho-L-seryl-[protein] + H2O = L-seryl-[protein] + phosphate. It catalyses the reaction O-phospho-L-threonyl-[protein] + H2O = L-threonyl-[protein] + phosphate. Functionally, protein phosphatase that dephosphorylates 'Ser-5' of the heptad repeats YSPTSPS in the C-terminal domain of the large RNA polymerase II subunit ama-1. By regulating the phosphorylation status of ama-1 and thus ama-1 binding to specific polyadenylation sites, regulates alternative polyadenylation of pre-mRNAs, including unc-44 and dlk-1 mRNAs. This results in the tissue-specific expression of unc-44 isoforms. The polypeptide is RNA polymerase II subunit A C-terminal domain phosphatase ssup-72 (Caenorhabditis elegans).